The primary structure comprises 245 residues: 5'-nucleotidase SurE (245 aa).

The a divalent metal cation site is built by D8, D9, S39, and N97.

It belongs to the SurE nucleotidase family. A divalent metal cation serves as cofactor.

It is found in the cytoplasm. The catalysed reaction is a ribonucleoside 5'-phosphate + H2O = a ribonucleoside + phosphate. In terms of biological role, nucleotidase that shows phosphatase activity on nucleoside 5'-monophosphates. The protein is 5'-nucleotidase SurE of Clostridium kluyveri (strain NBRC 12016).